A 408-amino-acid polypeptide reads, in one-letter code: E3 ubiquitin-protein ligase At1g12760 (408 aa).

A disordered region spans residues 1–52 (MSTETTTGNSSLIPASSSSSSSDAIDPAPLLFNGDDNEGNNGGGGGERRSVR). A compositionally biased stretch (low complexity) spans 10 to 34 (SSLIPASSSSSSSDAIDPAPLLFNG). A run of 2 helical transmembrane segments spans residues 100-120 (VVVL…AILV) and 133-153 (VWLL…CVEY). Residues 160–195 (RTNRTTTTTPPRSRSSSSSSSSSSLEEEALGSRRNS) are disordered. Over residues 163 to 183 (RTTTTTPPRSRSSSSSSSSSS) the composition is skewed to low complexity. Transmembrane regions (helical) follow at residues 219–239 (ANTM…SAGG), 254–274 (IVFL…ACVI), and 275–295 (GIAV…VADQ). The RING-type; atypical zinc-finger motif lies at 353–394 (CCICLSAYEDGTELRELPCGHHFHCSCVDKWLYINATCPLCK).

The protein resides in the membrane. It catalyses the reaction S-ubiquitinyl-[E2 ubiquitin-conjugating enzyme]-L-cysteine + [acceptor protein]-L-lysine = [E2 ubiquitin-conjugating enzyme]-L-cysteine + N(6)-ubiquitinyl-[acceptor protein]-L-lysine.. The protein operates within protein modification; protein ubiquitination. In terms of biological role, mediates E2-dependent protein ubiquitination in vitro. The protein is E3 ubiquitin-protein ligase At1g12760 of Arabidopsis thaliana (Mouse-ear cress).